The sequence spans 407 residues: MPAPLFLSGPCEICGQKTSGRHFGVMSCRSCAAFFRRAATCSRIFGRCPNGNCKLLENGKFKCKKCRMKRCLEVGMDETKFQCNRDLISSSNKFQKRVSLIEPPPQSLSTFLGRPTLLLCCEPTRASHIKTLINVTYMVDVARDILKRDVSTKIPYQFHNSLERLALSLEEIRSREPDEKIKMLRKIGQEESLLIWEQAFLRAVEWFSNFSEFNALDELSKMTILKSAWISWTRLEKLAETADHQRKKIFGDSVMMCGNDACLDLANYEVDLTWCTNYTTEQLLFYLSPEIEQNHFLSLQELVELNPTSTELSYMLLQITLHLAGKKAQGQLLEITEMLLEAQGNHLHEYYVKKLKMPNYVMRLAKLMKINRRIESDMRDRVEKNHIARIFNILKVEFSEPDMFEST.

The NR C4-type zinc-finger motif lies at 11–31 (CEICGQKTSGRHFGVMSCRSC). The segment at 47–66 (RCPNGNCKLLENGKFKCKKC) adopts an NR C4-type; degenerate zinc-finger fold. Residues 157–407 (QFHNSLERLA…FSEPDMFEST (251 aa)) enclose the NR LBD domain.

The protein belongs to the nuclear hormone receptor family.

It localises to the nucleus. Functionally, orphan nuclear receptor. This chain is Nuclear hormone receptor family member nhr-134 (nhr-134), found in Caenorhabditis elegans.